The chain runs to 129 residues: Large ribosomal subunit protein bL12c (129 aa).

Belongs to the bacterial ribosomal protein bL12 family. Homodimer. Part of the ribosomal stalk of the 50S ribosomal subunit. Forms a multimeric L10(L12)X complex, where L10 forms an elongated spine to which 2 to 4 L12 dimers bind in a sequential fashion. Binds GTP-bound translation factors.

Its subcellular location is the plastid. It is found in the chloroplast. Functionally, forms part of the ribosomal stalk which helps the ribosome interact with GTP-bound translation factors. Is thus essential for accurate translation. The chain is Large ribosomal subunit protein bL12c from Pyropia yezoensis (Susabi-nori).